An 840-amino-acid polypeptide reads, in one-letter code: Protein translocase subunit SecA (840 aa).

ATP is bound by residues glutamine 85, 103–107 (GEGKT), and aspartate 492. The disordered stretch occupies residues 787 to 821 (QRERVAKETGASHGGDSQEIKKKPVKKEPKVGRND). The segment covering 802–819 (DSQEIKKKPVKKEPKVGR) has biased composition (basic and acidic residues). Zn(2+) contacts are provided by cysteine 823, cysteine 825, cysteine 834, and cysteine 835.

Belongs to the SecA family. As to quaternary structure, monomer and homodimer. Part of the essential Sec protein translocation apparatus which comprises SecA, SecYEG and auxiliary proteins SecDF. Other proteins may also be involved. Zn(2+) serves as cofactor.

It localises to the cell membrane. It is found in the cytoplasm. It catalyses the reaction ATP + H2O + cellular proteinSide 1 = ADP + phosphate + cellular proteinSide 2.. Functionally, part of the Sec protein translocase complex. Interacts with the SecYEG preprotein conducting channel. Has a central role in coupling the hydrolysis of ATP to the transfer of proteins into and across the cell membrane, serving as an ATP-driven molecular motor driving the stepwise translocation of polypeptide chains across the membrane. The polypeptide is Protein translocase subunit SecA (Clostridium perfringens (strain 13 / Type A)).